The chain runs to 559 residues: Potassium-transporting ATPase potassium-binding subunit (559 aa).

The next 13 membrane-spanning stretches (helical) occupy residues 5-25 (GFLLIASFLLILLVLAKPLGS), 27-47 (LARLIAAVPLPGVAGVERILW), 63-83 (LLALLTLNLLGLGILFCLLFW), 132-152 (GLTVQNFLSAATGIAVVFALI), 170-190 (LVRITLWILFPVALIIALFFI), 253-273 (LAQMLAIFLIPAALCFAFGEA), 283-303 (LLWAMSFIFVVCVAVVMWAEV), 327-347 (FGVLASSLFAVVTTAASCGAV), 356-376 (ALGGMVPMWLMQIGEVVFGGV), 379-399 (GLYGMLLFVLLAVFIAGLMIG), 416-436 (MTALAILVTPMLVLLGSALAM), 484-504 (LLAFCMFVGRFGVIIPVMAIA), and 524-544 (GALFIGLLIGTVLLVGALTFI).

Belongs to the KdpA family. As to quaternary structure, the system is composed of three essential subunits: KdpA, KdpB and KdpC.

The protein localises to the cell inner membrane. Functionally, part of the high-affinity ATP-driven potassium transport (or Kdp) system, which catalyzes the hydrolysis of ATP coupled with the electrogenic transport of potassium into the cytoplasm. This subunit binds the periplasmic potassium ions and delivers the ions to the membrane domain of KdpB through an intramembrane tunnel. In Salmonella dublin (strain CT_02021853), this protein is Potassium-transporting ATPase potassium-binding subunit.